A 103-amino-acid chain; its full sequence is Small ribosomal subunit protein uS14c (103 aa).

The protein belongs to the universal ribosomal protein uS14 family. In terms of assembly, part of the 30S ribosomal subunit.

Its subcellular location is the plastid. It is found in the chloroplast. Functionally, binds 16S rRNA, required for the assembly of 30S particles. This chain is Small ribosomal subunit protein uS14c, found in Oryza nivara (Indian wild rice).